Here is a 173-residue protein sequence, read N- to C-terminus: MLLFKDILTGDEMFTDSVKYKLVDDCIFEIECEHVTRKVGEVALDGANPSAEEVEEGTEEGTESGLDLVLNMRLVETGFSKTDYKNYLKTYTKALMDKWKEDGKSEAEVNEAKSKLTEAVKKVLPRIGDMQFFLGESSNPDGIVALLEYRPNKSGGETPVVMFFKHGLLEEKQ.

The TCTP domain maps to 1-173 (MLLFKDILTG…FKHGLLEEKQ (173 aa)).

Belongs to the TCTP family.

It localises to the cytoplasm. Its function is as follows. Involved in calcium binding and microtubule stabilization. The polypeptide is Translationally-controlled tumor protein homolog (Tctp) (Ixodes scapularis (Black-legged tick)).